The sequence spans 279 residues: Pantothenate synthetase (279 aa).

ATP is bound at residue 26 to 33 (MGNLHDGH). His-33 functions as the Proton donor in the catalytic mechanism. Position 57 (Gln-57) interacts with (R)-pantoate. Gln-57 serves as a coordination point for beta-alanine. ATP is bound at residue 144 to 147 (GKKD). Residue Gln-150 coordinates (R)-pantoate. An ATP-binding site is contributed by 181–184 (LSSR).

The protein belongs to the pantothenate synthetase family. Homodimer.

The protein resides in the cytoplasm. It carries out the reaction (R)-pantoate + beta-alanine + ATP = (R)-pantothenate + AMP + diphosphate + H(+). It functions in the pathway cofactor biosynthesis; (R)-pantothenate biosynthesis; (R)-pantothenate from (R)-pantoate and beta-alanine: step 1/1. In terms of biological role, catalyzes the condensation of pantoate with beta-alanine in an ATP-dependent reaction via a pantoyl-adenylate intermediate. This Herminiimonas arsenicoxydans protein is Pantothenate synthetase.